Reading from the N-terminus, the 506-residue chain is MSDQNAVETRTDVVLVGAGIMSATLGAILRQVQPDWSITTFERLDAVAAESSDPWNNAGTGHSALCELNYTPQNADGTVDITKAVNVNEQFQVSRQFWAHGVESGVLTQPKEFINPIPHVSFVHGEANAKYLRARYDALAGHPLFAGMEYIDAPDEFTRRLPLMAKGRDFSDPVALNWTQDGTDVDFGALTKQLLGYVGASGGVVHFGHEVTDLTKQSDGSWVVKVTNRRNGVKKVVRAKFVFVGAGGGALHLLQKSGIEEAKGFGGFPVSGAFLRCTNPELIDQHRAKVYGKAAVGAPPMSVPHLDTRVIGNKPGLLFGPYAGWSPKFLKQGRVTDLPSSVKPDNLLSMLGVGVSELGLVKYLISELAMSEAGRIETLREFVPKALGKDWELITAGQRVQVIRRAKGKGGVLEFGTAVVNAADGTIAGLLGASPGASTAVPAMLDVLQRCFPAQYESWKPKLQEMVPSLGVKLSDDTALFSQVWDWTSKVLQLDTSKVEDASVAV.

This sequence belongs to the MQO family. Requires FAD as cofactor.

It carries out the reaction (S)-malate + a quinone = a quinol + oxaloacetate. The protein operates within carbohydrate metabolism; tricarboxylic acid cycle; oxaloacetate from (S)-malate (quinone route): step 1/1. This Rhodococcus jostii (strain RHA1) protein is Probable malate:quinone oxidoreductase.